The primary structure comprises 121 residues: DNA-directed RNA polymerase subunit Rpo8 (121 aa).

It belongs to the archaeal Rpo8 RNA polymerase subunit family. As to quaternary structure, part of the 13-subunit RNA polymerase complex. In terms of processing, this subunit is phosphorylated.

It is found in the cytoplasm. The catalysed reaction is RNA(n) + a ribonucleoside 5'-triphosphate = RNA(n+1) + diphosphate. DNA-dependent RNA polymerase (RNAP) catalyzes the transcription of DNA into RNA using the four ribonucleoside triphosphates as substrates. In Sulfolobus acidocaldarius (strain ATCC 33909 / DSM 639 / JCM 8929 / NBRC 15157 / NCIMB 11770), this protein is DNA-directed RNA polymerase subunit Rpo8.